The chain runs to 544 residues: Matrilin-1 (544 aa).

Residues Met-1 to Gly-26 form the signal peptide. A VWFA 1 domain is found at Asp-42–Phe-217. Asn-77 carries an N-linked (GlcNAc...) asparagine glycan. The 41-residue stretch at Val-224–Asn-264 folds into the EGF-like domain. 3 disulfides stabilise this stretch: Cys-228–Cys-239, Cys-235–Cys-248, and Cys-250–Cys-263. The region spanning Asp-276 to Leu-448 is the VWFA 2 domain. Asn-345 carries N-linked (GlcNAc...) asparagine glycosylation.

Homotrimer. Part of a complex composed of MATN1 (via VWFA1 domain), type 2 collagens and type 6 collagens. Forms a complex (via covalent bonds) with ACAN; the interaction increases in abundance with increasing age of the organism via an increase in occupancy of MATN1 binding sites. Interacts with COMP. In terms of processing, N-glycosylated; reduces binding affinity for type 2 collagens. As to expression, expressed in trachea from fetus into adulthood (at protein level).

It is found in the secreted. The protein resides in the extracellular space. The protein localises to the extracellular matrix. A major component of the extracellular matrix of non-articular cartilage. Binds to type 2 collagens and forms long concatenated protein networks as part of the extracellular matrix. Required for the network-like organization and bundling of collagen fibrils surrounding chondrocytes in the zones of maturation and hypertrophy. Required for mechanotransduction and adaption to mechanical loading in cartilage chondrocytes, resulting in an increase in expression of the extracellular matrix components ACAN and COL2A1. Acts as a moderator of angiogenesis in response to injury. This Bos taurus (Bovine) protein is Matrilin-1.